The following is an 821-amino-acid chain: Maternal DNA replication licensing factor mcm6 (821 aa).

The segment at 159 to 186 (CMDCQSVVKDVEQQFRYTQPTICKNPVC) adopts a C4-type zinc-finger fold. Residues 347-554 (LYHNLCTSLF…TDYAIARRIV (208 aa)) form the MCM domain. Residue 397–404 (GDPSTSKS) participates in ATP binding. The Arginine finger signature appears at 529–532 (SRFD).

It belongs to the MCM family. In terms of assembly, component of the mcm2-7 complex (RLF-M). The complex forms a toroidal hexameric ring with the proposed subunit order mcm2-mcm6-mcm4-mcm7-mcm3-mcm5. The heterodimer of mmcm3/mcm5 interacts with mcm4, mmcm6, mcm7 and weakly with mcm2. Component of the CMG helicase complex, composed of the mcm2-7 complex, the GINS complex and cdc45.

It localises to the nucleus. It is found in the chromosome. The catalysed reaction is ATP + H2O = ADP + phosphate + H(+). In terms of biological role, acts as a component of the mcm2-7 complex (mcm complex) which is the putative replicative helicase essential for 'once per cell cycle' DNA replication initiation and elongation in eukaryotic cells. The active ATPase sites in the mcm2-7 ring are formed through the interaction surfaces of two neighboring subunits such that a critical structure of a conserved arginine finger motif is provided in trans relative to the ATP-binding site of the Walker A box of the adjacent subunit. The six ATPase active sites, however, are likely to contribute differentially to the complex helicase activity. The existence of maternal and zygotic forms of mcm3 and mcm6 suggests that specific forms of mcm2-7 complexes may be used during different stages of development. The protein is Maternal DNA replication licensing factor mcm6 of Xenopus tropicalis (Western clawed frog).